Consider the following 400-residue polypeptide: Melanization protease 1 (400 aa).

A signal peptide spans 1-22; that stretch reads MEPHFFFTVLWMLLMGTSSTYA. Positions 23 to 137 are cleaved as a propeptide — activation peptide; sequence QEIFGYCRTP…PNCGENFGDR (115 aa). In terms of domain architecture, Clip spans 28–91; that stretch reads YCRTPDENSG…FCFTNVQICC (64 aa). 3 cysteine pairs are disulfide-bonded: C29-C90, C39-C70, and C45-C91. The segment at 98 to 120 is disordered; that stretch reads NQQPQWGNHPQPTQTTKPTKRSG. 3 cysteine pairs are disulfide-bonded: C130-C268, C168-C184, and C210-C220. The Peptidase S1 domain maps to 138-399; sequence VVGGNETTKR…YLNWIENNVR (262 aa). Residue N142 is glycosylated (N-linked (GlcNAc...) asparagine). The active-site Charge relay system is H183. 4 residues coordinate Ca(2+): E201, D203, T206, and D209. The Charge relay system role is filled by D248. N296 carries N-linked (GlcNAc...) asparagine glycosylation. Cystine bridges form between C315-C332 and C342-C375. S346 serves as the catalytic Charge relay system.

The protein belongs to the peptidase S1 family. CLIP subfamily.

Its function is as follows. Serine protease which plays an essential role in the melanization immune response by acting downstream of sp7 to activate prophenoloxidase (PPO1). May function in diverse Hayan-dependent PPO1-activating cascades that are negatively controlled by different serpin proteins; Spn27A in the hemolymph and Spn77BA in the trachea. Regulation of melanization and PPO1 activation appears to be largely independent of the Toll signaling pathway. This is Melanization protease 1 from Drosophila melanogaster (Fruit fly).